We begin with the raw amino-acid sequence, 303 residues long: Polyisoprenyl-teichoic acid--peptidoglycan teichoic acid transferase TagU (303 aa).

At 1 to 4 the chain is on the cytoplasmic side; the sequence is MKKK. The helical; Signal-anchor for type II membrane protein transmembrane segment at 5–25 threads the bilayer; that stretch reads ILFWVLGILGVLIIGGGIYAY. The Extracellular portion of the chain corresponds to 26 to 303; the sequence is NVYSSVSNTL…KLRSHLEVTK (278 aa).

It belongs to the LytR/CpsA/Psr (LCP) family.

It localises to the cell membrane. It participates in cell wall biogenesis. Its function is as follows. May catalyze the final step in cell wall teichoic acid biosynthesis, the transfer of the anionic cell wall polymers (APs) from their lipid-linked precursor to the cell wall peptidoglycan (PG). In Bacillus cereus (strain AH820), this protein is Polyisoprenyl-teichoic acid--peptidoglycan teichoic acid transferase TagU.